Consider the following 312-residue polypeptide: Dihydroorotate dehydrogenase B (NAD(+)), catalytic subunit (312 aa).

Residues S23 and 47-48 (KA) contribute to the FMN site. Residues K47 and 71-75 (NAIGL) contribute to the substrate site. 2 residues coordinate FMN: N102 and N130. Substrate is bound at residue N130. C133 (nucleophile) is an active-site residue. FMN contacts are provided by K168 and I194. Substrate is bound at residue 195 to 196 (NT). FMN contacts are provided by residues G220, 246 to 247 (GG), and 268 to 269 (GT).

The protein belongs to the dihydroorotate dehydrogenase family. Type 1 subfamily. Heterotetramer of 2 PyrK and 2 PyrD type B subunits. FMN serves as cofactor.

The protein resides in the cytoplasm. The enzyme catalyses (S)-dihydroorotate + NAD(+) = orotate + NADH + H(+). It functions in the pathway pyrimidine metabolism; UMP biosynthesis via de novo pathway; orotate from (S)-dihydroorotate (NAD(+) route): step 1/1. Catalyzes the conversion of dihydroorotate to orotate with NAD(+) as electron acceptor. The protein is Dihydroorotate dehydrogenase B (NAD(+)), catalytic subunit (pyrDB) of Enterococcus faecalis (strain ATCC 700802 / V583).